The primary structure comprises 162 residues: UPF0114 protein SO_3997 (162 aa).

A run of 3 helical transmembrane segments spans residues 10-32 (YASR…GLGI), 53-75 (LVLV…MVMF), and 136-156 (IMWY…MGYL).

The protein belongs to the UPF0114 family.

It localises to the cell membrane. The protein is UPF0114 protein SO_3997 of Shewanella oneidensis (strain ATCC 700550 / JCM 31522 / CIP 106686 / LMG 19005 / NCIMB 14063 / MR-1).